The sequence spans 1414 residues: DNA-directed RNA polymerase subunit beta' (1414 aa).

4 residues coordinate Zn(2+): cysteine 70, cysteine 72, cysteine 85, and cysteine 88. The Mg(2+) site is built by aspartate 460, aspartate 462, and aspartate 464. 4 residues coordinate Zn(2+): cysteine 815, cysteine 889, cysteine 896, and cysteine 899. Residues 1395-1414 (EAEAQFADISSTPDSDTDAS) are disordered.

Belongs to the RNA polymerase beta' chain family. The RNAP catalytic core consists of 2 alpha, 1 beta, 1 beta' and 1 omega subunit. When a sigma factor is associated with the core the holoenzyme is formed, which can initiate transcription. It depends on Mg(2+) as a cofactor. Zn(2+) serves as cofactor.

It carries out the reaction RNA(n) + a ribonucleoside 5'-triphosphate = RNA(n+1) + diphosphate. Its function is as follows. DNA-dependent RNA polymerase catalyzes the transcription of DNA into RNA using the four ribonucleoside triphosphates as substrates. This Herminiimonas arsenicoxydans protein is DNA-directed RNA polymerase subunit beta'.